The primary structure comprises 395 residues: Fractalkine (395 aa).

The signal sequence occupies residues 1–24 (MAPSPLAWLLRLAAFFHLCTLLPG). Residues 25–100 (QHLGMTKCEI…HQAAALTKNG (76 aa)) are chemokine and involved in interaction with ITGAV:ITGB3 and ITGA4:ITGB1. At 25 to 336 (QHLGMTKCEI…TPVPDTQAAT (312 aa)) the chain is on the extracellular side. 2 cysteine pairs are disulfide-bonded: Cys32-Cys58 and Cys36-Cys74. Residues 101–336 (GKFEKRVDNV…TPVPDTQAAT (236 aa)) form a mucin-like stalk region. Composition is skewed to polar residues over residues 148–172 (ARGT…TSEA) and 201–210 (AVYQSGSSSW). Disordered stretches follow at residues 148 to 180 (ARGT…LTAK) and 201 to 305 (AVYQ…SGSQ). Positions 218-236 (SPSTTAPSPQVSTTSPSTP) are enriched in low complexity. Residues 337–357 (RRQAVGLLAFLGLLFCLGVAM) traverse the membrane as a helical segment. The Cytoplasmic segment spans residues 358–395 (FAYQSLQGCPRKMAGEMVEGLRYVPRSCGSNSYVLVPV).

The protein belongs to the intercrine delta family. Monomer. Forms a ternary complex with CX3CR1 and ITGAV:ITGB3 or ITGA4:ITGB1. A soluble short 80 kDa form may be released by proteolytic cleavage from the long membrane-anchored form. In terms of tissue distribution, highest levels in brain. Lower levels in kidney, heart and lung. Also found in skeletal muscle and testis. Highly expressed in lesional smooth muscle cells, but not macrophages. Low levels of ABCD-3 mRNA were also found in anti-CD40-stimulated splenic B-cells, but not in resting B-cells. Also expressed in dendritic cells.

It localises to the cell membrane. The protein localises to the secreted. Its function is as follows. Chemokine that acts as a ligand for both CX3CR1 and integrins ITGAV:ITGB3 and ITGA4:ITGB1. The CX3CR1-CX3CL1 signaling exerts distinct functions in different tissue compartments, such as immune response, inflammation, cell adhesion and chemotaxis. Regulates leukocyte adhesion and migration processes at the endothelium. Can activate integrins in both a CX3CR1-dependent and CX3CR1-independent manner. In the presence of CX3CR1, activates integrins by binding to the classical ligand-binding site (site 1) in integrins. In the absence of CX3CR1, binds to a second site (site 2) in integrins which is distinct from site 1 and enhances the binding of other integrin ligands to site 1. The soluble form is chemotactic for T-cells and monocytes, but not for neutrophils. Functionally, the membrane-bound form promotes adhesion of those leukocytes to endothelial cells. The sequence is that of Fractalkine from Mus musculus (Mouse).